The chain runs to 180 residues: Large ribosomal subunit protein uL6 (180 aa).

Belongs to the universal ribosomal protein uL6 family. Part of the 50S ribosomal subunit.

Its function is as follows. This protein binds to the 23S rRNA, and is important in its secondary structure. It is located near the subunit interface in the base of the L7/L12 stalk, and near the tRNA binding site of the peptidyltransferase center. The sequence is that of Large ribosomal subunit protein uL6 from Mycoplasma capricolum subsp. capricolum (strain California kid / ATCC 27343 / NCTC 10154).